The sequence spans 397 residues: Elongation factor Tu (397 aa).

The region spanning 10–206 (KPHVNIGTIG…AVDEYIPTPE (197 aa)) is the tr-type G domain. Positions 19–26 (GHVDHGKT) are G1. Position 19-26 (19-26 (GHVDHGKT)) interacts with GTP. Thr26 provides a ligand contact to Mg(2+). A G2 region spans residues 60 to 64 (GITIS). Residues 81-84 (DCPG) form a G3 region. GTP-binding positions include 81–85 (DCPGH) and 136–139 (NKAD). A G4 region spans residues 136-139 (NKAD). The tract at residues 174–176 (SAL) is G5.

The protein belongs to the TRAFAC class translation factor GTPase superfamily. Classic translation factor GTPase family. EF-Tu/EF-1A subfamily. As to quaternary structure, monomer.

Its subcellular location is the cytoplasm. The catalysed reaction is GTP + H2O = GDP + phosphate + H(+). In terms of biological role, GTP hydrolase that promotes the GTP-dependent binding of aminoacyl-tRNA to the A-site of ribosomes during protein biosynthesis. This Clostridium tetani (strain Massachusetts / E88) protein is Elongation factor Tu.